The primary structure comprises 322 residues: Sideroflexin-1 (322 aa).

Ser2 carries the post-translational modification N-acetylserine. Topologically, residues 2–102 (SGEVPPNINI…MSAQVPMNMT (101 aa)) are mitochondrial matrix. The helical transmembrane segment at 103–120 (ITGCMMTFYRTTPAVLFW) threads the bilayer. Residues 121 to 146 (QWINQSFNAVVNYTNRSGDAPLTVNE) are Mitochondrial intermembrane-facing. The chain crosses the membrane as a helical span at residues 147–167 (LGTAYVSATTGAVATALGLNA). Residues 168 to 174 (LTKHVSP) lie on the Mitochondrial matrix side of the membrane. The helical transmembrane segment at 175–195 (LIGRFVPFAAVAAANCINIPL) threads the bilayer. Over 196–228 (MRQRELKVGIPVTDENGTRLGESTNAAKQAITQ) the chain is Mitochondrial intermembrane. Residues 229 to 249 (VVISRILMAAPGMAIPPFIMN) form a helical membrane-spanning segment. Residues 250 to 266 (TLEKKAFLKRFPWMSAP) are Mitochondrial matrix-facing. Residues 267 to 287 (IQVTLVGFCLVFATPLCCALF) form a helical membrane-spanning segment. Over 288–322 (PQKSSMSVTSLEDDLQASIQKSHPELRRVYFNKGL) the chain is Mitochondrial intermembrane.

This sequence belongs to the sideroflexin family.

The protein localises to the mitochondrion inner membrane. It carries out the reaction L-serine(in) = L-serine(out). The catalysed reaction is L-alanine(in) = L-alanine(out). It catalyses the reaction L-cysteine(in) = L-cysteine(out). Amino acid transporter importing serine, an essential substrate of the mitochondrial branch of the one-carbon pathway, into mitochondria. Mitochondrial serine is then converted to glycine and formate, which exits to the cytosol where it is used to generate the charged folates that serve as one-carbon donors. May also transport other amino acids including alanine and cysteine. This is Sideroflexin-1 (Sfxn1) from Rattus norvegicus (Rat).